A 324-amino-acid chain; its full sequence is MNYAKISQVAHYAPRQVVSNDDLAEIMDTSDEWISSRTGIKNRHLSSDETTSDLATKVAENLLQKSGISAQDLDFIIVATITPDSLMPSAAARVQANIGAKNAFAFDLTAACSGFIFALSTGEKFISSGRYQKGLVIGSETLSKTVDWSDRSTAVLFGDGAGGVLLESASEQHFLAESQFTDGSRGDSLTCGKIGLSSPFSEKGENQPYLTMDGRAIFDFAIRDVARSIKETIESSQLSAEDLDFLLLHQANIRILDKMAKKLGVAREKLPANMMEYGNTSAASIPILLSECVEQGLIKLNGNQTILMSGFGGGLTWGTLIVTI.

Catalysis depends on residues cysteine 112 and histidine 249. Residues 250–254 are ACP-binding; it reads QANIR. Asparagine 279 is a catalytic residue.

Belongs to the thiolase-like superfamily. FabH family. Homodimer.

Its subcellular location is the cytoplasm. The enzyme catalyses malonyl-[ACP] + acetyl-CoA + H(+) = 3-oxobutanoyl-[ACP] + CO2 + CoA. The protein operates within lipid metabolism; fatty acid biosynthesis. Its function is as follows. Catalyzes the condensation reaction of fatty acid synthesis by the addition to an acyl acceptor of two carbons from malonyl-ACP. Catalyzes the first condensation reaction which initiates fatty acid synthesis and may therefore play a role in governing the total rate of fatty acid production. Possesses both acetoacetyl-ACP synthase and acetyl transacylase activities. Its substrate specificity determines the biosynthesis of branched-chain and/or straight-chain of fatty acids. The protein is Beta-ketoacyl-[acyl-carrier-protein] synthase III of Streptococcus sanguinis (strain SK36).